Consider the following 215-residue polypeptide: Leucyl/phenylalanyl-tRNA--protein transferase (215 aa).

The protein belongs to the L/F-transferase family.

The protein localises to the cytoplasm. It carries out the reaction N-terminal L-lysyl-[protein] + L-leucyl-tRNA(Leu) = N-terminal L-leucyl-L-lysyl-[protein] + tRNA(Leu) + H(+). It catalyses the reaction N-terminal L-arginyl-[protein] + L-leucyl-tRNA(Leu) = N-terminal L-leucyl-L-arginyl-[protein] + tRNA(Leu) + H(+). The enzyme catalyses L-phenylalanyl-tRNA(Phe) + an N-terminal L-alpha-aminoacyl-[protein] = an N-terminal L-phenylalanyl-L-alpha-aminoacyl-[protein] + tRNA(Phe). Its function is as follows. Functions in the N-end rule pathway of protein degradation where it conjugates Leu, Phe and, less efficiently, Met from aminoacyl-tRNAs to the N-termini of proteins containing an N-terminal arginine or lysine. This is Leucyl/phenylalanyl-tRNA--protein transferase from Campylobacter jejuni subsp. jejuni serotype O:6 (strain 81116 / NCTC 11828).